The primary structure comprises 249 residues: Probable transcriptional regulatory protein ERGA_CDS_03720 (249 aa).

The disordered stretch occupies residues 1-21 (MAGHSQFANIKHRKGAQDAKR).

It belongs to the TACO1 family.

Its subcellular location is the cytoplasm. This is Probable transcriptional regulatory protein ERGA_CDS_03720 from Ehrlichia ruminantium (strain Gardel).